The primary structure comprises 247 residues: Proteasome subunit alpha type-7-1 (247 aa).

This sequence belongs to the peptidase T1A family. The 26S proteasome consists of a 20S proteasome core and two 19S regulatory subunits. The 20S proteasome core is composed of 28 subunits that are arranged in four stacked rings, resulting in a barrel-shaped structure. The two end rings are each formed by seven alpha subunits, and the two central rings are each formed by seven beta subunits. The catalytic chamber with the active sites is on the inside of the barrel.

The protein resides in the cytoplasm. Its subcellular location is the nucleus. Its function is as follows. The proteasome is a multicatalytic proteinase complex which is characterized by its ability to cleave peptides with Arg, Phe, Tyr, Leu, and Glu adjacent to the leaving group at neutral or slightly basic pH. The proteasome has an ATP-dependent proteolytic activity. The protein is Proteasome subunit alpha type-7-1 (Pros28.1) of Drosophila virilis (Fruit fly).